Consider the following 163-residue polypeptide: Putative 4-hydroxy-4-methyl-2-oxoglutarate aldolase (163 aa).

Substrate-binding positions include 76–79 and Arg-98; that span reads GDML. Asp-99 provides a ligand contact to a divalent metal cation.

It belongs to the class II aldolase/RraA-like family. Homotrimer. A divalent metal cation serves as cofactor.

It carries out the reaction 4-hydroxy-4-methyl-2-oxoglutarate = 2 pyruvate. The enzyme catalyses oxaloacetate + H(+) = pyruvate + CO2. Its function is as follows. Catalyzes the aldol cleavage of 4-hydroxy-4-methyl-2-oxoglutarate (HMG) into 2 molecules of pyruvate. Also contains a secondary oxaloacetate (OAA) decarboxylase activity due to the common pyruvate enolate transition state formed following C-C bond cleavage in the retro-aldol and decarboxylation reactions. The chain is Putative 4-hydroxy-4-methyl-2-oxoglutarate aldolase from Pseudomonas entomophila (strain L48).